Reading from the N-terminus, the 127-residue chain is MGNRLCCGGTWSCPSTFQKKSKTGSHPRPTLSILKQQQLWQNGTKDYETTAPTYEQVLYPPASQKKTSNSTSEESDLHYADIHVLRQIRPHSLHTVKCLHSESATEYATLRFPQATPQYDSNNGTLV.

Residue Thr-30 is modified to Phosphothreonine. Residues Ala-51–Ser-75 are disordered. Phosphoserine is present on Ser-63.

This is an uncharacterized protein from Mus musculus (Mouse).